The primary structure comprises 357 residues: Naringenin,2-oxoglutarate 3-dioxygenase (357 aa).

Residues 189-293 form the Fe2OG dioxygenase domain; sequence CVDMDQKIVV…RLSIATFQNP (105 aa). 3 residues coordinate Fe cation: H216, D218, and H274. R284 contacts 2-oxoglutarate.

The protein belongs to the iron/ascorbate-dependent oxidoreductase family. The cofactor is Fe(2+). It depends on L-ascorbate as a cofactor.

The catalysed reaction is a (2S)-flavan-4-one + 2-oxoglutarate + O2 = a (2R,3R)-dihydroflavonol + succinate + CO2. It functions in the pathway secondary metabolite biosynthesis; flavonoid biosynthesis. In terms of biological role, catalyzes the 3-beta-hydroxylation of 2S-flavanones to 2R,3R-dihydroflavonols which are intermediates in the biosynthesis of flavonols, anthocyanidins, catechins and proanthocyanidins in plants. This chain is Naringenin,2-oxoglutarate 3-dioxygenase (FHT), found in Matthiola incana (Common stock).